The following is a 204-amino-acid chain: Serotonin N-acetyltransferase (204 aa).

Residue Thr28 is modified to Phosphothreonine; by PKA. An N-acetyltransferase domain is found at 32 to 193 (SEFRCLTPED…SFTELHCSLQ (162 aa)). Residue Leu121 participates in substrate binding. Acetyl-CoA is bound by residues 121–123 (LAV) and 129–134 (QQGRGP). Met156 is a binding site for substrate. 165–167 (YER) is a binding site for acetyl-CoA. Position 202 is a phosphoserine (Ser202).

It belongs to the acetyltransferase family. AANAT subfamily. As to quaternary structure, monomer. Interacts with several 14-3-3 proteins, including YWHAB, YWHAE, YWHAG and YWHAZ, preferentially when phosphorylated at Thr-28. Phosphorylation on Ser-202 also allows binding to YWHAZ, but with lower affinity. The interaction with YWHAZ considerably increases affinity for arylalkylamines and acetyl-CoA and protects the enzyme from dephosphorylation and proteasomal degradation. It may also prevent thiol-dependent inactivation. CAMP-dependent phosphorylation regulates AANAT activity by promoting interaction with 14-3-3 proteins. Phosphorylation levels exhibit night/day variations, with an increase during nighttime. In terms of tissue distribution, highly expressed in pineal gland and in the photoreceptor outer segments in the retina. Expressed at about 100-fold lower levels in the pituitary gland and testis. Not detected in other tissues.

Its subcellular location is the cytoplasm. It carries out the reaction a 2-arylethylamine + acetyl-CoA = an N-acetyl-2-arylethylamine + CoA + H(+). It participates in aromatic compound metabolism; melatonin biosynthesis; melatonin from serotonin: step 1/2. In terms of biological role, controls the night/day rhythm of melatonin production in the pineal gland. Catalyzes the N-acetylation of serotonin into N-acetylserotonin, the penultimate step in the synthesis of melatonin. The sequence is that of Serotonin N-acetyltransferase (AANAT) from Macaca mulatta (Rhesus macaque).